The sequence spans 488 residues: (Z)-2-((N-methylformamido)methylene)-5-hydroxybutyrolactone dehydrogenase (488 aa).

Residues 149 to 150 (WN) and 226 to 227 (GG) each bind NAD(+). The active-site Proton acceptor is the glutamate 248. Leucine 249 is an NAD(+) binding site. Residue cysteine 282 is the Nucleophile of the active site. Position 380 (glutamate 380) interacts with NAD(+).

It belongs to the aldehyde dehydrogenase family. In terms of assembly, homodimer.

The enzyme catalyses (Z)-2-((N-methylformamido)methylene)-5-hydroxybutanolactone + NAD(+) + H2O = (E)-2-((N-methylformamido) methylene)succinate + NADH + 3 H(+). Functionally, involved in the degradation of the pyridine ring of trigonelline (TG; N-methylnicotinate) into succinate and methylamine as carbon and nitrogen sources, respectively. Catalyzes the NAD(+)-dependent oxidation of (Z)-2-((N-methylformamido)methylene)-5-hydroxybutyrolactone (MFMB) to yield (E)-2-((N-methylformamido)methylene)succinate (MFMS). The chain is (Z)-2-((N-methylformamido)methylene)-5-hydroxybutyrolactone dehydrogenase from Acinetobacter baylyi (strain ATCC 33305 / BD413 / ADP1).